The chain runs to 615 residues: 1-deoxy-D-xylulose-5-phosphate synthase (615 aa).

Thiamine diphosphate contacts are provided by residues His-72 and 111-113 (GHS). Mg(2+) is bound at residue Asp-142. Residues 143–144 (GA), Asn-171, Tyr-278, and Glu-360 each bind thiamine diphosphate. Mg(2+) is bound at residue Asn-171.

This sequence belongs to the transketolase family. DXPS subfamily. Homodimer. Requires Mg(2+) as cofactor. Thiamine diphosphate serves as cofactor.

The catalysed reaction is D-glyceraldehyde 3-phosphate + pyruvate + H(+) = 1-deoxy-D-xylulose 5-phosphate + CO2. The protein operates within metabolic intermediate biosynthesis; 1-deoxy-D-xylulose 5-phosphate biosynthesis; 1-deoxy-D-xylulose 5-phosphate from D-glyceraldehyde 3-phosphate and pyruvate: step 1/1. In terms of biological role, catalyzes the acyloin condensation reaction between C atoms 2 and 3 of pyruvate and glyceraldehyde 3-phosphate to yield 1-deoxy-D-xylulose-5-phosphate (DXP). The polypeptide is 1-deoxy-D-xylulose-5-phosphate synthase (Campylobacter jejuni subsp. jejuni serotype O:6 (strain 81116 / NCTC 11828)).